A 113-amino-acid polypeptide reads, in one-letter code: C-C motif chemokine 15 (113 aa).

Positions 1-21 are cleaved as a signal peptide; the sequence is MKVSVAALSCLMLVAVLGSQA. 3 cysteine pairs are disulfide-bonded: Cys-53–Cys-77, Cys-54–Cys-93, and Cys-64–Cys-104.

It belongs to the intercrine beta (chemokine CC) family. Monomer. In terms of processing, the N-terminal is proteolytically cleaved by proteases associated with inflammatory responses. The processed forms CCL15(22-92), CCL15(25-92) and CCL15(29-92) exhibit increase in CCR1-mediated signaling and chemotaxis assays in vitro. In terms of tissue distribution, most abundant in heart, skeletal muscle and adrenal gland. Lower levels in placenta, liver, pancreas and bone marrow. CCL15(22-92), CCL15(25-92) and CCL15(29-92) are found in high levels in synovial fluids from rheumatoid patients.

The protein localises to the secreted. Functionally, chemotactic factor that attracts T-cells and monocytes, but not neutrophils, eosinophils, or B-cells. Acts mainly via CC chemokine receptor CCR1. Also binds to CCR3. CCL15(22-92), CCL15(25-92) and CCL15(29-92) are more potent chemoattractants than the CCL15. The sequence is that of C-C motif chemokine 15 (CCL15) from Homo sapiens (Human).